Here is a 216-residue protein sequence, read N- to C-terminus: Adenylate kinase (216 aa).

Residue 11–16 (GSGKGT) participates in ATP binding. Residues 31 to 60 (ATGDLFRKAIECGDELGDTVKSYMERGELV) are NMP. Residues Thr-32, Arg-37, 58-60 (ELV), 86-89 (GFPR), and Gln-93 contribute to the AMP site. The tract at residues 127 to 163 (GRWVCRSCQSPYQSGCAEVTKGKCSRCQGELYQRPDD) is LID. Arg-128 contributes to the ATP binding site. Zn(2+) is bound by residues Cys-131, Cys-134, Cys-150, and Cys-153. 2 residues coordinate AMP: Arg-160 and Arg-171. Ala-199 is an ATP binding site.

It belongs to the adenylate kinase family. As to quaternary structure, monomer.

Its subcellular location is the cytoplasm. It catalyses the reaction AMP + ATP = 2 ADP. It participates in purine metabolism; AMP biosynthesis via salvage pathway; AMP from ADP: step 1/1. Its function is as follows. Catalyzes the reversible transfer of the terminal phosphate group between ATP and AMP. Plays an important role in cellular energy homeostasis and in adenine nucleotide metabolism. The polypeptide is Adenylate kinase (Dehalococcoides mccartyi (strain ATCC BAA-2100 / JCM 16839 / KCTC 5957 / BAV1)).